Reading from the N-terminus, the 104-residue chain is Pyrimidine/purine nucleoside phosphorylase (104 aa).

Belongs to the nucleoside phosphorylase PpnP family.

It carries out the reaction a purine D-ribonucleoside + phosphate = a purine nucleobase + alpha-D-ribose 1-phosphate. The enzyme catalyses adenosine + phosphate = alpha-D-ribose 1-phosphate + adenine. It catalyses the reaction cytidine + phosphate = cytosine + alpha-D-ribose 1-phosphate. The catalysed reaction is guanosine + phosphate = alpha-D-ribose 1-phosphate + guanine. It carries out the reaction inosine + phosphate = alpha-D-ribose 1-phosphate + hypoxanthine. The enzyme catalyses thymidine + phosphate = 2-deoxy-alpha-D-ribose 1-phosphate + thymine. It catalyses the reaction uridine + phosphate = alpha-D-ribose 1-phosphate + uracil. The catalysed reaction is xanthosine + phosphate = alpha-D-ribose 1-phosphate + xanthine. Its function is as follows. Catalyzes the phosphorolysis of diverse nucleosides, yielding D-ribose 1-phosphate and the respective free bases. Can use uridine, adenosine, guanosine, cytidine, thymidine, inosine and xanthosine as substrates. Also catalyzes the reverse reactions. The protein is Pyrimidine/purine nucleoside phosphorylase of Geotalea daltonii (strain DSM 22248 / JCM 15807 / FRC-32) (Geobacter daltonii).